A 175-amino-acid polypeptide reads, in one-letter code: Adenine phosphoribosyltransferase (175 aa).

Belongs to the purine/pyrimidine phosphoribosyltransferase family. As to quaternary structure, homodimer.

The protein localises to the cytoplasm. It catalyses the reaction AMP + diphosphate = 5-phospho-alpha-D-ribose 1-diphosphate + adenine. It participates in purine metabolism; AMP biosynthesis via salvage pathway; AMP from adenine: step 1/1. Catalyzes a salvage reaction resulting in the formation of AMP, that is energically less costly than de novo synthesis. The chain is Adenine phosphoribosyltransferase from Francisella tularensis subsp. tularensis (strain FSC 198).